Here is a 133-residue protein sequence, read N- to C-terminus: ATP synthase epsilon chain (133 aa).

Belongs to the ATPase epsilon chain family. F-type ATPases have 2 components, CF(1) - the catalytic core - and CF(0) - the membrane proton channel. CF(1) has five subunits: alpha(3), beta(3), gamma(1), delta(1), epsilon(1). CF(0) has three main subunits: a, b and c.

Its subcellular location is the cell inner membrane. Its function is as follows. Produces ATP from ADP in the presence of a proton gradient across the membrane. This Desulfosudis oleivorans (strain DSM 6200 / JCM 39069 / Hxd3) (Desulfococcus oleovorans) protein is ATP synthase epsilon chain.